Here is a 375-residue protein sequence, read N- to C-terminus: Outer membrane porin C (375 aa).

The signal sequence occupies residues Met1–Ala21. The chain crosses the membrane as a beta stranded span at residues Ala22–Lys27. The Periplasmic portion of the chain corresponds to Asp28–Gly29. A beta stranded transmembrane segment spans residues Asn30 to Phe44. At Ser45–Val50 the chain is on the extracellular side. Residues Asp51–Gln66 form a beta stranded membrane-spanning segment. The Periplasmic segment spans residues Val67–Gln70. The chain crosses the membrane as a beta stranded span at residues Leu71–Gln82. Over Gly83–Asn91 the chain is Extracellular. A beta stranded membrane pass occupies residues Ser92–Phe103. At Gln104–Asp105 the chain is on the periplasmic side. The beta stranded transmembrane segment at Ile106–Arg113 threads the bilayer. At Asn114–Gly146 the chain is on the extracellular side. The beta stranded transmembrane segment at Asn147 to Asp156 threads the bilayer. Residues Phe157–Gly163 are Periplasmic-facing. Residues Leu164–Gly172 traverse the membrane as a beta stranded segment. Residues Gln173–Asn201 are Extracellular-facing. Residues Gly202–Asp212 traverse the membrane as a beta stranded segment. Residues Tyr213–Gly215 lie on the Periplasmic side of the membrane. Residues Phe216 to Lys226 form a beta stranded membrane-spanning segment. Topologically, residues Arg227–Asp241 are extracellular. A beta stranded transmembrane segment spans residues Arg242–Ala254. Residues Asn255 to Asn256 are Periplasmic-facing. A beta stranded membrane pass occupies residues Ile257–Tyr267. Over Asn268–Asn279 the chain is Extracellular. The chain crosses the membrane as a beta stranded span at residues Lys280 to Phe292. Residues Asp293 to Phe294 are Periplasmic-facing. Residues Gly295–Asn309 traverse the membrane as a beta stranded segment. Residues Leu310–Asp320 lie on the Extracellular side of the membrane. A beta stranded transmembrane segment spans residues Glu321–Phe335. The Periplasmic segment spans residues Asn336–Asn338. Residues Met339–Asn348 traverse the membrane as a beta stranded segment. The Extracellular portion of the chain corresponds to Leu349–Asp364. The beta stranded transmembrane segment at Asp365–Phe375 threads the bilayer.

Belongs to the Gram-negative porin family. As to quaternary structure, homotrimer. Forms mixed heterotrimers with OmpF; other mixed heterotrimers are also probable. The N- and C-termini are two parts of the same strand. Extracellular loop 3 folds back into the lumen of the barrel forming a constriction zone that controls the pore size, while the trimer interface is formed by the packing of hydrophobic residues on the outer edges of beta strands 1 to 5 and further stabilized by extracellular loop 2 which reaches into the neighboring monomer.

Its subcellular location is the cell outer membrane. Its function is as follows. Forms pores that allow passive diffusion of small molecules across the outer membrane, including some antibiotics. Variation of the residues in the constriction zone modifies the transverse electric field in the zone, altering antibiotic resistance. In terms of biological role, (Microbial infection) Is not susceptible to CdiA-EC536-mediated toxicity, which uses OmpC-OmpF heterotrimers of some strains as its outer membrane receptor. Mutagenesis of extracellular loops L4 or L5 of this protein confers susceptibility to the toxin. The protein is Outer membrane porin C (ompC) of Escherichia coli O6:H1 (strain CFT073 / ATCC 700928 / UPEC).